Here is a 214-residue protein sequence, read N- to C-terminus: Adenylate kinase (214 aa).

10 to 15 (GAGKGT) contacts ATP. The tract at residues 30-59 (STGDMLRAAVKAGTPLGLEAKKVMDAGQLV) is NMP. AMP is bound by residues Thr31, Arg36, 57–59 (QLV), 85–88 (GFPR), and Gln92. The segment at 122-159 (GRRVHPGSGRVYHIVFNQPKVEGKDDVTGEDLAIRPDD) is LID. ATP is bound by residues Arg123 and 132–133 (VY). AMP-binding residues include Arg156 and Arg167. Gln200 is an ATP binding site.

It belongs to the adenylate kinase family. In terms of assembly, monomer.

Its subcellular location is the cytoplasm. The enzyme catalyses AMP + ATP = 2 ADP. Its pathway is purine metabolism; AMP biosynthesis via salvage pathway; AMP from ADP: step 1/1. Its function is as follows. Catalyzes the reversible transfer of the terminal phosphate group between ATP and AMP. Plays an important role in cellular energy homeostasis and in adenine nucleotide metabolism. The protein is Adenylate kinase of Shewanella woodyi (strain ATCC 51908 / MS32).